Here is a 23-residue protein sequence, read N- to C-terminus: Septenin 2 (23 aa).

In terms of tissue distribution, expressed in skin glands.

Its subcellular location is the secreted. May act as an antimicrobial peptide. The polypeptide is Septenin 2 (Osteopilus septentrionalis (Cuban treefrog)).